Here is a 347-residue protein sequence, read N- to C-terminus: Single-pass membrane and coiled-coil domain-containing protein 2 (347 aa).

The disordered stretch occupies residues 1-89 (MMSLQLGTAG…PPSKPDEQEV (89 aa)). 3 stretches are compositionally biased toward basic and acidic residues: residues 10–21 (GKERQLAEKSRD), 36–51 (EMDHISDRPDEKDKPS), and 60–86 (YKMDTEKWDGLEQESEHSQDPPSKPDE). Residues 139–238 (DWLERINNII…MNVLNSKLEM (100 aa)) are a coiled coil. Ser-178 is subject to Phosphoserine. The segment at 243-274 (GSDADSHNSEDVDTEQEEPLVPEASPSLSASP) is disordered. The span at 253-262 (DVDTEQEEPL) shows a compositional bias: acidic residues. Over residues 263–273 (VPEASPSLSAS) the composition is skewed to low complexity. The chain crosses the membrane as a helical span at residues 288 to 308 (LFVIVYVVTITGLSCYILFVD).

The protein resides in the membrane. The chain is Single-pass membrane and coiled-coil domain-containing protein 2 (Smco2) from Mus musculus (Mouse).